The sequence spans 430 residues: Adenylosuccinate synthetase (430 aa).

GTP contacts are provided by residues 12 to 18 and 40 to 42; these read GDEGKGK and GHT. The Proton acceptor role is filled by Asp13. Mg(2+) contacts are provided by Asp13 and Gly40. IMP-binding positions include 13 to 16, 38 to 41, Thr128, Arg142, Gln223, Thr238, and Arg302; these read DEGK and NAGH. Catalysis depends on His41, which acts as the Proton donor. 298–304 contributes to the substrate binding site; sequence VNTGRTR. GTP-binding positions include Arg304, 330 to 332, and 412 to 414; these read KLD and GVG.

Belongs to the adenylosuccinate synthetase family. As to quaternary structure, homodimer. Requires Mg(2+) as cofactor.

Its subcellular location is the cytoplasm. It catalyses the reaction IMP + L-aspartate + GTP = N(6)-(1,2-dicarboxyethyl)-AMP + GDP + phosphate + 2 H(+). It functions in the pathway purine metabolism; AMP biosynthesis via de novo pathway; AMP from IMP: step 1/2. Its function is as follows. Plays an important role in the de novo pathway of purine nucleotide biosynthesis. Catalyzes the first committed step in the biosynthesis of AMP from IMP. The sequence is that of Adenylosuccinate synthetase from Corynebacterium ammoniagenes (Brevibacterium ammoniagenes).